The sequence spans 1284 residues: Kinesin-like protein KIN-4C (1284 aa).

Positions 12-364 (SVKVVVNIRP…LKYANRARNI (353 aa)) constitute a Kinesin motor domain. Position 91-98 (91-98 (GQTGSGKT)) interacts with ATP. Coiled-coil stretches lie at residues 407–445 (SAALEELQLLQQKVSLLELKNSELNHELKERELSYEQLA), 561–711 (RDHS…QFRS), and 911–950 (MCKEKEHLICDLKEKVVALNGRIRQLETQVKDLNNQNMLL). Disordered regions lie at residues 1040 to 1070 (RRQTVSSHLNPNPGSGTTQKSAKSEMASQEK) and 1158 to 1284 (MSEK…NHLR). The segment covering 1043–1070 (TVSSHLNPNPGSGTTQKSAKSEMASQEK) has biased composition (polar residues). Composition is skewed to basic and acidic residues over residues 1158–1172 (MSEKEAQETKSRKPL) and 1275–1284 (NANEKENHLR).

Belongs to the TRAFAC class myosin-kinesin ATPase superfamily. Kinesin family. KIN-4 subfamily. In terms of assembly, homodimer.

Functionally, microtubule-dependent motor protein involved in the control of the oriented deposition of cellulose microfibrils. The sequence is that of Kinesin-like protein KIN-4C from Oryza sativa subsp. japonica (Rice).